A 570-amino-acid chain; its full sequence is nebramycin 5' synthase (570 aa).

The interval Met-1–Gly-354 is kae1-like. Tobramycin is bound at residue Asp-12. The Proton acceptor role is filled by His-14. Residue Lys-39 participates in ATP binding. Fe cation is bound by residues His-114, His-118, and Asp-137. Gln-139, Gly-168, and Glu-172 together coordinate carbamoyl adenylate. Positions 172 and 228 each coordinate tobramycin. Carbamoyl adenylate is bound by residues Gly-310 and Asn-314. Position 338 (Asp-338) interacts with Fe cation. Residues Gly-367–His-570 are yrdC-like. The ATP site is built by Arg-418 and Arg-449. Position 418–419 (Arg-418–Ala-419) interacts with carbamoyl phosphate. Carbamoyl phosphate is bound by residues Arg-498 and Asn-528 to Ser-530.

It belongs to the NodU/CmcH family. Fe(2+) is required as a cofactor.

It catalyses the reaction tobramycin + carbamoyl phosphate + ATP + H2O = nebramycin 5' + AMP + phosphate + diphosphate + H(+). The enzyme catalyses kanamycin A + carbamoyl phosphate + ATP + H2O = 6''-O-carbamoylkanamycin A + AMP + phosphate + diphosphate + H(+). It carries out the reaction carbamoyl phosphate + ATP + H2O = carbamoyl adenylate + phosphate + diphosphate. The catalysed reaction is tobramycin + carbamoyl adenylate = nebramycin 5' + AMP + H(+). It catalyses the reaction carbamoyl adenylate + kanamycin A = 6''-O-carbamoylkanamycin A + AMP + H(+). Its pathway is antibiotic biosynthesis; kanamycin biosynthesis. It functions in the pathway antibiotic biosynthesis; tobramycin biosynthesis. Its activity is regulated as follows. ADP inhibits the formation of nebramycin 5'. TobZ is involved in the biosynthesis of the 2-deoxystreptamine-containing aminoglycoside antibiotics such as nebramycin 5 and 6-O-carbamoylkanamycin. Catalyzes the hydrolysis of carbamoyl phosphate and its subsequent adenylation by ATP to yield O-carbamoyladenylate. Then it catalyzes the transfer of the carbamoyl moiety from O-carbamoyladenylate to the tobramycin 6-hydroxy group to yield nebramycin 5'. It catalyzes the same reaction with kanamycin A. These reactions are considerably slower in the presence of deoxy-ATP. The sequence is that of nebramycin 5' synthase (tobZ) from Streptoalloteichus tenebrarius (strain ATCC 17920 / DSM 40477 / JCM 4838 / CBS 697.72 / NBRC 16177 / NCIMB 11028 / NRRL B-12390 / A12253. 1 / ISP 5477) (Streptomyces tenebrarius).